An 821-amino-acid chain; its full sequence is KN motif and ankyrin repeat domain-containing protein 3 (821 aa).

Residues methionine 1–leucine 10 show a composition bias toward polar residues. Disordered stretches follow at residues methionine 1–valine 36, glycine 58–glutamine 184, leucine 224–threonine 333, and alanine 385–glutamate 547. The span at arginine 77–alanine 88 shows a compositional bias: low complexity. Basic and acidic residues predominate over residues proline 128–alanine 150. The segment covering proline 151 to alanine 181 has biased composition (low complexity). Serine 152, serine 160, serine 164, serine 167, serine 168, and serine 177 each carry phosphoserine. Positions alanine 181–glutamine 230 form a coiled coil. The segment covering alanine 237–glycine 261 has biased composition (basic and acidic residues). Phosphoserine is present on residues serine 271, serine 280, and serine 293. Residues glycine 367 to threonine 404 adopt a coiled-coil conformation. Low complexity-rich tracts occupy residues glutamate 388–alanine 400 and asparagine 494–glycine 507. ANK repeat units lie at residues asparagine 622–arginine 652, alanine 656–alanine 690, threonine 695–alanine 724, aspartate 728–isoleucine 758, and glutamate 762–histidine 785. The tract at residues alanine 784–glutamine 821 is disordered. A compositionally biased stretch (polar residues) spans serine 787 to threonine 805.

Strongly expressed in breast, liver, lung, skeletal muscle and kidney.

In terms of biological role, may be involved in the control of cytoskeleton formation by regulating actin polymerization. This Homo sapiens (Human) protein is KN motif and ankyrin repeat domain-containing protein 3.